A 161-amino-acid polypeptide reads, in one-letter code: Endoribonuclease YbeY (161 aa).

Zn(2+) is bound by residues His121, His125, and His131.

This sequence belongs to the endoribonuclease YbeY family. Zn(2+) serves as cofactor.

The protein resides in the cytoplasm. Single strand-specific metallo-endoribonuclease involved in late-stage 70S ribosome quality control and in maturation of the 3' terminus of the 16S rRNA. The chain is Endoribonuclease YbeY from Xylella fastidiosa (strain 9a5c).